The following is a 317-amino-acid chain: Serpentine receptor class delta-26 (317 aa).

The next 7 membrane-spanning stretches (helical) occupy residues 5–25 (LLHTVLSVTGVTLNAFMMYLA), 38–58 (AIITIKTFTDILTSAMSFFVM), 83–103 (ACYVGHMFMLCFLECNLIWMI), 122–142 (SLVFVALCLSIPSFIHMAAWI), 176–196 (ITLILQLFITSVLVLIAYAWI), 227–247 (FQVFLPTFIFLGFFIFAAMFG), and 258–278 (LVSIAFMFSPICSPFSYILFV).

The protein belongs to the nematode receptor-like protein srd family.

Its subcellular location is the membrane. The polypeptide is Serpentine receptor class delta-26 (srd-26) (Caenorhabditis elegans).